The primary structure comprises 655 residues: Broad substrate specificity ATP-binding cassette transporter ABCG2 (655 aa).

The Cytoplasmic portion of the chain corresponds to 1 to 395; it reads MSSSNVEVFI…KNLLGNPQAS (395 aa). The region spanning 37–286 is the ABC transporter domain; sequence LSFHNICYRV…FESAGYHCEA (250 aa). Residues 80 to 87, 184 to 190, Glu-211, and His-243 contribute to the ATP site; these read GPTGGGKS and RGVSGGE. Thr-362 carries the phosphothreonine; by PIM1 modification. Residues 389–651 form the ABC transmembrane type-2 domain; it reads LGNPQASIAQ…TIAYLKLLFL (263 aa). Residues 396 to 416 traverse the membrane as a helical segment; sequence IAQIIVTVVLGLVIGAIYFGL. Topologically, residues 417–428 are extracellular; it reads KNDSTGIQNRAG. Residues 429 to 449 traverse the membrane as a helical segment; that stretch reads VLFFLTTNQCFSSVSAVELFV. The Cytoplasmic segment spans residues 450 to 477; it reads VEKKLFIHEYISGYYRVSSYFLGKLLSD. Residues 478–498 traverse the membrane as a helical segment; the sequence is LLPMRMLPSIIFTCIVYFMLG. The Extracellular segment spans residues 499-506; that stretch reads LKPKADAF. The chain crosses the membrane as a helical span at residues 507-527; sequence FVMMFTLMMVAYSASSMALAI. Topologically, residues 528 to 535 are cytoplasmic; sequence AAGQSVVS. Residues 536–556 form a helical membrane-spanning segment; the sequence is VATLLMTICFVFMMIFSGLLV. Over 557-630 the chain is Extracellular; that stretch reads NLTTIASWLS…LSPWGLWKNH (74 aa). Cys-592 and Cys-608 are disulfide-bonded. Asn-596 is a glycosylation site (N-linked (GlcNAc...) asparagine). The chain crosses the membrane as a helical span at residues 631 to 651; that stretch reads VALACMIVIFLTIAYLKLLFL. Residues 652 to 655 are Cytoplasmic-facing; sequence KKYS.

Belongs to the ABC transporter superfamily. ABCG family. Eye pigment precursor importer (TC 3.A.1.204) subfamily. As to quaternary structure, homodimer; disulfide-linked. The minimal functional unit is a homodimer, but the major oligomeric form in plasma membrane is a homotetramer with possibility of higher order oligomerization up to homododecamers. In terms of processing, N-glycosylated. Glycosylation-deficient ABCG2 is normally expressed and functional. Post-translationally, phosphorylated. Phosphorylation at Thr-362 by PIM1 is induced by drugs like mitoxantrone and is associated with cells increased drug resistance. It regulates the localization to the plasma membrane, the homooligomerization and therefore, the activity of the transporter. In terms of tissue distribution, highly expressed in placenta. Low expression in small intestine, liver and colon. Expressed in brain (at protein level).

It is found in the cell membrane. Its subcellular location is the apical cell membrane. It localises to the mitochondrion membrane. The catalysed reaction is ATP + H2O + xenobioticSide 1 = ADP + phosphate + xenobioticSide 2.. It carries out the reaction urate(in) + ATP + H2O = urate(out) + ADP + phosphate + H(+). It catalyses the reaction indoxyl sulfate(in) + ATP + H2O = indoxyl sulfate(out) + ADP + phosphate + H(+). The enzyme catalyses sphing-4-enine 1-phosphate(in) + ATP + H2O = sphing-4-enine 1-phosphate(out) + ADP + phosphate + H(+). The catalysed reaction is estrone 3-sulfate(in) + ATP + H2O = estrone 3-sulfate(out) + ADP + phosphate + H(+). It carries out the reaction dehydroepiandrosterone 3-sulfate(in) + ATP + H2O = dehydroepiandrosterone 3-sulfate(out) + ADP + phosphate + H(+). It catalyses the reaction 4-methylumbelliferone sulfate(in) + ATP + H2O = 4-methylumbelliferone sulfate(out) + ADP + phosphate + H(+). The enzyme catalyses 5,7-dimethyl-2-methylamino-4-(3-pyridylmethyl)-1,3-benzothiazol-6-yl beta-D-glucuronate(in) + ATP + H2O = 5,7-dimethyl-2-methylamino-4-(3-pyridylmethyl)-1,3-benzothiazol-6-yl beta-D-glucuronate(out) + ADP + phosphate + H(+). The catalysed reaction is 4-methylumbelliferone beta-D-glucuronate(in) + ATP + H2O = 4-methylumbelliferone beta-D-glucuronate(out) + ADP + phosphate + H(+). It carries out the reaction 5,7-dimethyl-2-methylamino-4-(3-pyridylmethyl)-1,3-benzothiazol-6-yl sulfate(in) + ATP + H2O = 5,7-dimethyl-2-methylamino-4-(3-pyridylmethyl)-1,3-benzothiazol-6-yl sulfate(out) + ADP + phosphate + H(+). It catalyses the reaction 17beta-estradiol 17-O-(beta-D-glucuronate)(in) + ATP + H2O = 17beta-estradiol 17-O-(beta-D-glucuronate)(out) + ADP + phosphate + H(+). The enzyme catalyses methotrexate(in) + ATP + H2O = methotrexate(out) + ADP + phosphate + H(+). The catalysed reaction is riboflavin(in) + ATP + H2O = riboflavin(out) + ADP + phosphate + H(+). It carries out the reaction pheophorbide a(in) + ATP + H2O = pheophorbide a(out) + ADP + phosphate + H(+). It catalyses the reaction itaconate(in) + ATP + H2O = itaconate(out) + ADP + phosphate + H(+). With respect to regulation, specifically inhibited by the fungal toxin fumitremorgin C and Ko143. Functionally, broad substrate specificity ATP-dependent transporter of the ATP-binding cassette (ABC) family that actively extrudes a wide variety of physiological compounds, dietary toxins and xenobiotics from cells. Involved in porphyrin homeostasis, mediating the export of protoporphyrin IX (PPIX) from both mitochondria to cytosol and cytosol to extracellular space, it also functions in the cellular export of heme. Also mediates the efflux of sphingosine-1-P from cells. Acts as a urate exporter functioning in both renal and extrarenal urate excretion. In kidney, it also functions as a physiological exporter of the uremic toxin indoxyl sulfate. Also involved in the excretion of steroids like estrone 3-sulfate/E1S, 3beta-sulfooxy-androst-5-en-17-one/DHEAS, and other sulfate conjugates. Mediates the secretion of the riboflavin and biotin vitamins into milk. Extrudes pheophorbide a, a phototoxic porphyrin catabolite of chlorophyll, reducing its bioavailability. Plays an important role in the exclusion of xenobiotics from the brain. It confers to cells a resistance to multiple drugs and other xenobiotics including mitoxantrone, pheophorbide, camptothecin, methotrexate, azidothymidine, and the anthracyclines daunorubicin and doxorubicin, through the control of their efflux. In placenta, it limits the penetration of drugs from the maternal plasma into the fetus. May play a role in early stem cell self-renewal by blocking differentiation. In inflammatory macrophages, exports itaconate from the cytosol to the extracellular compartment and limits the activation of TFEB-dependent lysosome biogenesis involved in antibacterial innate immune response. The polypeptide is Broad substrate specificity ATP-binding cassette transporter ABCG2 (ABCG2) (Homo sapiens (Human)).